Here is a 355-residue protein sequence, read N- to C-terminus: Glycerol-1-phosphate dehydrogenase [NAD(P)+] (355 aa).

NAD(+)-binding positions include Gly-101–Asp-105 and Thr-123–Ser-126. Asp-128 is a binding site for substrate. An NAD(+)-binding site is contributed by Ser-132. Asp-175 contacts substrate. Residues Asp-175 and His-255 each contribute to the Zn(2+) site. Residue His-259 coordinates substrate. His-271 lines the Zn(2+) pocket.

The protein belongs to the glycerol-1-phosphate dehydrogenase family. Homodimer. It depends on Zn(2+) as a cofactor.

The protein resides in the cytoplasm. It carries out the reaction sn-glycerol 1-phosphate + NAD(+) = dihydroxyacetone phosphate + NADH + H(+). It catalyses the reaction sn-glycerol 1-phosphate + NADP(+) = dihydroxyacetone phosphate + NADPH + H(+). It functions in the pathway membrane lipid metabolism; glycerophospholipid metabolism. Its function is as follows. Catalyzes the NAD(P)H-dependent reduction of dihydroxyacetonephosphate (DHAP or glycerone phosphate) to glycerol 1-phosphate (G1P). The G1P thus generated is used as the glycerophosphate backbone of phospholipids in the cellular membranes of Archaea. In Staphylothermus marinus (strain ATCC 43588 / DSM 3639 / JCM 9404 / F1), this protein is Glycerol-1-phosphate dehydrogenase [NAD(P)+].